Consider the following 149-residue polypeptide: 3-dehydroquinate dehydratase (149 aa).

Tyr-26 serves as the catalytic Proton acceptor. Substrate contacts are provided by Asn-77, His-83, and Asp-90. The active-site Proton donor is His-103. Substrate contacts are provided by residues 104 to 105 (LS) and Arg-114.

This sequence belongs to the type-II 3-dehydroquinase family. As to quaternary structure, homododecamer.

The catalysed reaction is 3-dehydroquinate = 3-dehydroshikimate + H2O. The protein operates within metabolic intermediate biosynthesis; chorismate biosynthesis; chorismate from D-erythrose 4-phosphate and phosphoenolpyruvate: step 3/7. Its function is as follows. Catalyzes a trans-dehydration via an enolate intermediate. The chain is 3-dehydroquinate dehydratase (aroQ) from Haemophilus influenzae (strain ATCC 51907 / DSM 11121 / KW20 / Rd).